Consider the following 2368-residue polypeptide: Highly reducing polyketide synthase cla2 (2368 aa).

The Ketosynthase family 3 (KS3) domain maps to 10-434 (QIPIAIVGLG…GTNGLVVLEA (425 aa)). Active-site for beta-ketoacyl synthase activity residues include Cys182, His317, and His357. The segment at 548 to 877 (FVFTGQGAQW…RGQNALDTSL (330 aa)) is malonyl-CoA:ACP transacylase (MAT) domain. Ser638 functions as the For malonyltransferase activity in the catalytic mechanism. The N-terminal hotdog fold stretch occupies residues 936-1071 (HSMIGLKQPM…GLVAIEYTNK (136 aa)). The segment at 936-1175 (HSMIGLKQPM…AIFQSIFGST (240 aa)) is dehydratase (DH) domain. The PKS/mFAS DH domain maps to 936–1255 (HSMIGLKQPM…MTEPEVGDDA (320 aa)). His968 functions as the Proton acceptor; for dehydratase activity in the catalytic mechanism. The C-terminal hotdog fold stretch occupies residues 1099–1255 (PLMIRREKFY…MTEPEVGDDA (157 aa)). The active-site Proton donor; for dehydratase activity is Asp1165. An enoylreductase (ER) domain region spans residues 1655–1967 (GFLDSLQFIK…QGKHRGKLVL (313 aa)). The catalytic ketoreductase (KRc) domain stretch occupies residues 1991–2170 (ATYLIIGGLG…AVAVNLTIIR (180 aa)). Residues 2283-2360 (QASEIITEGL…VLAKTIASRS (78 aa)) form the Carrier domain. Residue Ser2320 is modified to O-(pantetheine 4'-phosphoryl)serine.

Its pathway is secondary metabolite biosynthesis. In terms of biological role, highly reducing polyketide synthase; part of the gene cluster that mediates the biosynthesis of cladosporin, a tricyclic octaketide that acts as an antimalarial agent though inhibition of the Plasmodium falciparum lysyl-tRNA synthetase. The highly reducing polyketide synthase cla2 is responsible for biosynthesis up to the pentaketide stage, including of the tetrahydropyran (THP) ring, whereas the three subsequent ketide extensions with no reduction are catalyzed by the non-reducing polyketide synthase cla3. This chain is Highly reducing polyketide synthase cla2, found in Cladosporium cladosporioides.